Here is a 581-residue protein sequence, read N- to C-terminus: Activating signal cointegrator 1 (581 aa).

An N-acetylalanine modification is found at Ala-2. The segment at 100 to 121 (DQLKRSRRKGRNKQEVPAFPEP) is disordered. A C4-type zinc finger spans residues 167–219 (GRHPCDCLGQKHKLINNCLVCGRIVCEQEGSGPCLFCGSLVCTNEEQDILQRD). A mediates interaction with DDRGK1 region spans residues 200–300 (CLFCGSLVCT…ASDSNQWLSK (101 aa)). Phosphoserine is present on Ser-276. The residue at position 289 (Tyr-289) is a Phosphotyrosine. The segment at 300–400 (KVEREMLQKR…WVDNTGSTPQ (101 aa)) is mediates interaction with UFL1. Glycyl lysine isopeptide (Lys-Gly) (interchain with G-Cter in UFM1) cross-links involve residues Lys-324 and Lys-334. Polar residues predominate over residues 390–406 (QWVDNTGSTPQKKTSLS). Residues 390–410 (QWVDNTGSTPQKKTSLSAGPR) are disordered. The region spanning 437-531 (LSMHQPWASL…FQEQFPDISQ (95 aa)) is the ASCH domain.

In terms of assembly, interacts with the thyroid hormone receptor/TR (via the ligand-binding domain); this interaction requires the presence of thyroid hormone. Interacts with the androgen receptor/AR; in an androgen, testosterone and dihydrotestosterone-dependent manner. Interacts with ESR1 (estrogen ligand-bound); competes with UFSP2. Interacts with UFSP2; competes with ligand-bound ESR1. Interacts with DDRGK1 and UFL1; the interaction with DDRGK1 is direct. Interacts with NCOA1. Interacts with EP300. Part of the ASC-1 complex, that contains TRIP4, ASCC1, ASCC2 and ASCC3. Identified in the RQT (ribosome quality control trigger) complex, that contains ASCC2, ASCC3 and TRIP4. Interacts with NEK6. Interacts with CSRP1. Interacts with ZCCHC4. Phosphorylated by NEK6. In terms of processing, polyufmylated by the UFM1-conjugating system composed of the enzymes UBA5, UFC1 and UFL1. Deufmylated by the protease UFSP2. Ufmylation of TRIP4 is promoted by ligand-bound nuclear receptors that compete with UFSP2 for interaction with TRIP4. Nuclear receptors-induced ufmylation promotes the recruitment of additional transcriptional coactivators like EP300 and NCOA1 and therefore the assembly of a coactivator complex facilitating nuclear receptor-mediated transcription. In terms of tissue distribution, ubiquitously expressed. Expressed in the spinal cord, brain, paraspinal ganglia, thyroid, and submandibular glands. Expressed at low level in all the muscles (at protein level) but with higher expression in axial than in limb muscles.

It localises to the nucleus. Its subcellular location is the cytoplasm. It is found in the cytosol. The protein localises to the cytoskeleton. The protein resides in the microtubule organizing center. It localises to the centrosome. Its function is as follows. Transcription coactivator which associates with nuclear receptors, transcriptional coactivators including EP300, CREBBP and NCOA1, and basal transcription factors like TBP and TFIIA to facilitate nuclear receptors-mediated transcription. May thereby play an important role in establishing distinct coactivator complexes under different cellular conditions. Plays a role in thyroid hormone receptor and estrogen receptor transactivation. Also involved in androgen receptor transactivation. Plays a pivotal role in the transactivation of NF-kappa-B, SRF and AP1. Acts as a mediator of transrepression between nuclear receptor and either AP1 or NF-kappa-B. May play a role in the development of neuromuscular junction. May play a role in late myogenic differentiation. Also functions as part of the RQC trigger (RQT) complex that activates the ribosome quality control (RQC) pathway, a pathway that degrades nascent peptide chains during problematic translation. This Mus musculus (Mouse) protein is Activating signal cointegrator 1.